Here is a 183-residue protein sequence, read N- to C-terminus: Adenine phosphoribosyltransferase (183 aa).

The protein belongs to the purine/pyrimidine phosphoribosyltransferase family. Homodimer.

The protein resides in the cytoplasm. It carries out the reaction AMP + diphosphate = 5-phospho-alpha-D-ribose 1-diphosphate + adenine. The protein operates within purine metabolism; AMP biosynthesis via salvage pathway; AMP from adenine: step 1/1. Functionally, catalyzes a salvage reaction resulting in the formation of AMP, that is energically less costly than de novo synthesis. This Citrobacter koseri (strain ATCC BAA-895 / CDC 4225-83 / SGSC4696) protein is Adenine phosphoribosyltransferase.